A 332-amino-acid polypeptide reads, in one-letter code: MATLKDQLIHNLLKEEQTPQNKITVVGVGAVGMACAISILMKDLADELALVDVIEDKLKGEMMDLQHGSLFLRTPKIVSGKDYSVTANSKLVIITAGARQQEGESRLNLVQRNVNIFKFIVPNVVKYSPNCKLLIVSNPVDILTYVAWKISGFPKNRVIGSGCNLDSARFRYLMGERLGVHPLSCHGWVLGEHGDSSVPVWSGMNVAGVSLKTLHPDLGTDKDKEQWKEVHKQVVESAYEVIKLKGYTSWAIGLSVADLAESIMKNLRRVHPVSTMIKGLYGIKDDVFLSVPCILGQNGISDLVKVTLTPEEEARLKKSADTLWGIQKELQF.

Ala-2 bears the N-acetylalanine mark. Lys-5 carries the N6-acetyllysine; alternate modification. Lys-5 carries the post-translational modification N6-succinyllysine; alternate. Lys-14 carries the N6-acetyllysine modification. Position 18 is a phosphothreonine (Thr-18). 29 to 57 (GAVGMACAISILMKDLADELALVDVIEDK) contributes to the NAD(+) binding site. Lys-57 carries the post-translational modification N6-acetyllysine; alternate. A Glycyl lysine isopeptide (Lys-Gly) (interchain with G-Cter in SUMO2); alternate cross-link involves residue Lys-57. Lys-81 is subject to N6-acetyllysine. Arg-99 is a binding site for NAD(+). A substrate-binding site is contributed by Arg-106. Position 118 is an N6-acetyllysine; alternate (Lys-118). Lys-118 carries the N6-succinyllysine; alternate modification. Lys-126 bears the N6-acetyllysine mark. NAD(+) is bound at residue Asn-138. The substrate site is built by Asn-138 and Arg-169. His-193 (proton acceptor) is an active-site residue. 2 positions are modified to N6-acetyllysine: Lys-224 and Lys-232. At Tyr-239 the chain carries Phosphotyrosine. At Lys-243 the chain carries N6-acetyllysine. Thr-248 lines the substrate pocket. Residue Thr-309 is modified to Phosphothreonine. Lys-318 is subject to N6-acetyllysine; alternate. Residue Lys-318 is modified to N6-succinyllysine; alternate. Position 322 is a phosphothreonine (Thr-322).

This sequence belongs to the LDH/MDH superfamily. LDH family. As to quaternary structure, homotetramer. Interacts with PTEN upstream reading frame protein MP31. In terms of processing, ISGylated.

The protein localises to the cytoplasm. It carries out the reaction (S)-lactate + NAD(+) = pyruvate + NADH + H(+). Its pathway is fermentation; pyruvate fermentation to lactate; (S)-lactate from pyruvate: step 1/1. Its function is as follows. Interconverts simultaneously and stereospecifically pyruvate and lactate with concomitant interconversion of NADH and NAD(+). This is L-lactate dehydrogenase A chain (LDHA) from Macaca fascicularis (Crab-eating macaque).